The following is a 1081-amino-acid chain: DNA polymerase delta catalytic subunit (1081 aa).

Positions 1-22 (MTSKRPGGSSFQPEVKRKRESD) are disordered. Cys-981, Cys-984, Cys-998, and Cys-1001 together coordinate Zn(2+). The CysA-type zinc finger occupies 981–1001 (CLGCKSVLPRAESENAVCKHC). [4Fe-4S] cluster-binding residues include Cys-1030, Cys-1033, Cys-1043, and Cys-1048. Positions 1030–1048 (CQNCAKTMQDKVNCSARDC) match the CysB motif motif.

The protein belongs to the DNA polymerase type-B family. As to quaternary structure, heterodimer with subunits of 125 kDa and 50 kDa. The 125 kDa subunit contains the polymerase active site and most likely the active site for the 3'-5' exonuclease activity. It depends on [4Fe-4S] cluster as a cofactor.

The protein localises to the nucleus. The enzyme catalyses DNA(n) + a 2'-deoxyribonucleoside 5'-triphosphate = DNA(n+1) + diphosphate. Its function is as follows. Possesses two enzymatic activities: DNA synthesis (polymerase) and an exonucleolytic activity that degrades single stranded DNA in the 3'- to 5'-direction. Required with its accessory proteins (proliferating cell nuclear antigen (PCNA) and replication factor C (RFC) or activator 1) for leading strand synthesis. Also involved in completing Okazaki fragments initiated by the DNA polymerase alpha/primase complex. The sequence is that of DNA polymerase delta catalytic subunit from Caenorhabditis elegans.